The sequence spans 308 residues: E3 ubiquitin-protein ligase RING2 (308 aa).

Position 2 is an N-acetylserine (Ser-2). Positions 2–179 (SQAVQTNGTQ…AEDNGDSSHC (178 aa)) are interaction with HIP2. Ser-41 is subject to Phosphoserine. An RING-type zinc finger spans residues 51-91 (CPICLDMLKNTMTTKECLHRFCADCIITALRSGNKECPTCR). Residues 93-98 (KLVSKR) are interaction with nucleosomes via an acidic patch on histone H2A and histone H2B. Residue Lys-112 forms a Glycyl lysine isopeptide (Lys-Gly) (interchain with G-Cter in ubiquitin) linkage. 2 positions are modified to phosphoserine: Ser-143 and Ser-168. The interval 157-206 (QRGKKQQIENGSGAEDNGDSSHCSNASTHSNQEAGPSNKRTKTSDDSGLE) is disordered. Residues 176 to 191 (SSHCSNASTHSNQEAG) show a composition bias toward polar residues. A Glycyl lysine isopeptide (Lys-Gly) (interchain with G-Cter in SUMO2) cross-link involves residue Lys-249.

Component of chromatin-associated Polycomb (PcG) complexes. Component of a number of PRC1-like complexes; these complexes contain either the polycomb group ring finger protein PCGF1, or PCGF2, or PCGF3, or BMI1, or PCGF5, or PCGF6. Distinct PRC1-like complexes are composed of a RING1 subunit (RING1B or RING1A), one of the six PCGF proteins (PCGF1, PCGF2, PCGF3, BMI1, PCGF5 or PCGF6), one PHC protein (PHC1, PHC2 or PHC3) and one of the CBX proteins (CBX2, CBX4, CBX6, CBX7 or CBX8). Part of a complex that contains RNF2, UB2D3 and BMI1; within that complex RNF2 and BMI1 form a tight heterodimer, where UB2D3 interacts only with RNF2. The complex composed of RNF2, UB2D3 and BMI1 binds nucleosomes, and has activity only with nucleosomal histone H2A. Part of a complex that contains PCGF5, RNF2 and UBE2D3. Part of a complex that contains AUTS2, PCGF5, RNF2, CSNK2B and RYBP. Interacts with CBX6 and CBX8. Interacts with PHC1, PCGF2, RYBP, CBX7, CBX4, CBX2, RNF1/RING1, BMI1 and PHC2. Interaction with RYBP and CBX7 is mutually exclusive; both compete for the same binding site on RNF2. Component of repressive BCOR complex containing a Polycomb group subcomplex at least composed of RYBP, PCGF1, BCOR and RING1. Interacts with CBX2 and PHC1. Interacts with CHTOP. Interacts with AURKB. Part of the E2F6.com-1 complex in G0 phase composed of E2F6, MGA, MAX, TFDP1, CBX3, BAT8, EUHMTASE1, RNF1/RING1, RNF2/RING2, MBLR, L3MBTL2 and YAF2. Component of some MLL1/MLL complex, at least composed of the core components KMT2A/MLL1, ASH2L, HCFC1/HCF1, WDR5 and RBBP5, as well as the facultative components BACC1, CHD8, E2F6, HSP70, INO80C, KANSL1, LAS1L, MAX, MCRS1, MGA, MYST1/MOF, PELP1, PHF20, PRP31, RING2, RUVB1/TIP49A, RUVB2/TIP49B, SENP3, TAF1, TAF4, TAF6, TAF7, TAF9 and TEX10. Interacts with RYBP, HIP2 and TFCP2. Interacts with NUPR1. Interacts with SAMD7 in a PHC2-dependent manner. In terms of processing, monoubiquitinated, by auto-ubiquitination. Polyubiquitinated in the presence of UBE2D3 (in vitro).

It localises to the nucleus. It is found in the cytoplasm. Its subcellular location is the chromosome. The enzyme catalyses S-ubiquitinyl-[E2 ubiquitin-conjugating enzyme]-L-cysteine + [acceptor protein]-L-lysine = [E2 ubiquitin-conjugating enzyme]-L-cysteine + N(6)-ubiquitinyl-[acceptor protein]-L-lysine.. The protein operates within protein modification; protein ubiquitination. Functionally, E3 ubiquitin-protein ligase that mediates monoubiquitination of 'Lys-119' of histone H2A (H2AK119Ub), thereby playing a central role in histone code and gene regulation. H2AK119Ub gives a specific tag for epigenetic transcriptional repression and participates in X chromosome inactivation of female mammals. May be involved in the initiation of both imprinted and random X inactivation. Essential component of a Polycomb group (PcG) multiprotein PRC1-like complex, a complex class required to maintain the transcriptionally repressive state of many genes, including Hox genes, throughout development. PcG PRC1 complex acts via chromatin remodeling and modification of histones, rendering chromatin heritably changed in its expressibility. E3 ubiquitin-protein ligase activity is enhanced by BMI1/PCGF4. Acts as the main E3 ubiquitin ligase on histone H2A of the PRC1 complex, while RING1 may rather act as a modulator of RNF2/RING2 activity. Plays a role in the transcriptional repression of genes that are required for pluripotency in embryonic stem cells, thereby contributing to differentiation of the ectodermal and endodermal germ layers. Association with the chromosomal DNA is cell-cycle dependent. In resting B- and T-lymphocytes, interaction with AURKB leads to block its activity, thereby maintaining transcription in resting lymphocytes. Also acts as a negative regulator of autophagy by mediating ubiquitination of AMBRA1, leading to its subsequent degradation. In Rattus norvegicus (Rat), this protein is E3 ubiquitin-protein ligase RING2 (Rnf2).